Consider the following 244-residue polypeptide: Ribosomal RNA small subunit methyltransferase G (244 aa).

S-adenosyl-L-methionine is bound by residues Gly79, Phe84, 130–131, and Arg150; that span reads AE. The segment at 221-244 is disordered; sequence KKPSPKRYPRKPGTPAKQPLTAPM.

This sequence belongs to the methyltransferase superfamily. RNA methyltransferase RsmG family.

Its subcellular location is the cytoplasm. In terms of biological role, specifically methylates the N7 position of a guanine in 16S rRNA. This Lactiplantibacillus plantarum (strain ATCC BAA-793 / NCIMB 8826 / WCFS1) (Lactobacillus plantarum) protein is Ribosomal RNA small subunit methyltransferase G.